We begin with the raw amino-acid sequence, 430 residues long: Glutamate-1-semialdehyde 2,1-aminomutase 2 (430 aa).

Lys-269 carries the post-translational modification N6-(pyridoxal phosphate)lysine.

This sequence belongs to the class-III pyridoxal-phosphate-dependent aminotransferase family. HemL subfamily. In terms of assembly, homodimer. Pyridoxal 5'-phosphate serves as cofactor.

It is found in the cytoplasm. The catalysed reaction is (S)-4-amino-5-oxopentanoate = 5-aminolevulinate. The protein operates within porphyrin-containing compound metabolism; protoporphyrin-IX biosynthesis; 5-aminolevulinate from L-glutamyl-tRNA(Glu): step 2/2. This chain is Glutamate-1-semialdehyde 2,1-aminomutase 2, found in Lysinibacillus sphaericus (strain C3-41).